We begin with the raw amino-acid sequence, 363 residues long: Chorismate synthase (363 aa).

NADP(+) is bound by residues R48 and R54. Residues 125 to 127 (RSS), 237 to 238 (NA), G277, 292 to 296 (KPTSS), and R318 contribute to the FMN site.

The protein belongs to the chorismate synthase family. Homotetramer. The cofactor is FMNH2.

The catalysed reaction is 5-O-(1-carboxyvinyl)-3-phosphoshikimate = chorismate + phosphate. It participates in metabolic intermediate biosynthesis; chorismate biosynthesis; chorismate from D-erythrose 4-phosphate and phosphoenolpyruvate: step 7/7. Its function is as follows. Catalyzes the anti-1,4-elimination of the C-3 phosphate and the C-6 proR hydrogen from 5-enolpyruvylshikimate-3-phosphate (EPSP) to yield chorismate, which is the branch point compound that serves as the starting substrate for the three terminal pathways of aromatic amino acid biosynthesis. This reaction introduces a second double bond into the aromatic ring system. The polypeptide is Chorismate synthase (Stutzerimonas stutzeri (strain A1501) (Pseudomonas stutzeri)).